The primary structure comprises 142 residues: Holo-[acyl-carrier-protein] synthase (142 aa).

The Mg(2+) site is built by Asp8 and Glu57.

Belongs to the P-Pant transferase superfamily. AcpS family. Mg(2+) serves as cofactor.

Its subcellular location is the cytoplasm. It catalyses the reaction apo-[ACP] + CoA = holo-[ACP] + adenosine 3',5'-bisphosphate + H(+). Its function is as follows. Transfers the 4'-phosphopantetheine moiety from coenzyme A to a Ser of acyl-carrier-protein. The polypeptide is Holo-[acyl-carrier-protein] synthase (Maricaulis maris (strain MCS10) (Caulobacter maris)).